We begin with the raw amino-acid sequence, 292 residues long: 4-hydroxy-tetrahydrodipicolinate synthase (292 aa).

Thr45 is a pyruvate binding site. Catalysis depends on Tyr133, which acts as the Proton donor/acceptor. The active-site Schiff-base intermediate with substrate is the Lys161. Residue Ile203 participates in pyruvate binding.

The protein belongs to the DapA family. Homotetramer; dimer of dimers.

It localises to the cytoplasm. The catalysed reaction is L-aspartate 4-semialdehyde + pyruvate = (2S,4S)-4-hydroxy-2,3,4,5-tetrahydrodipicolinate + H2O + H(+). The protein operates within amino-acid biosynthesis; L-lysine biosynthesis via DAP pathway; (S)-tetrahydrodipicolinate from L-aspartate: step 3/4. Catalyzes the condensation of (S)-aspartate-beta-semialdehyde [(S)-ASA] and pyruvate to 4-hydroxy-tetrahydrodipicolinate (HTPA). This Vibrio vulnificus (strain YJ016) protein is 4-hydroxy-tetrahydrodipicolinate synthase.